We begin with the raw amino-acid sequence, 158 residues long: 2-C-methyl-D-erythritol 2,4-cyclodiphosphate synthase (158 aa).

A divalent metal cation contacts are provided by D9 and H11. 4-CDP-2-C-methyl-D-erythritol 2-phosphate is bound by residues 9–11 (DVH) and 35–36 (HS). H43 lines the a divalent metal cation pocket. Residues 57 to 59 (DIG), 62 to 66 (FPDTD), 101 to 107 (AQKPKMA), 133 to 136 (TTTE), F140, and R143 each bind 4-CDP-2-C-methyl-D-erythritol 2-phosphate.

Belongs to the IspF family. As to quaternary structure, homotrimer. It depends on a divalent metal cation as a cofactor.

It catalyses the reaction 4-CDP-2-C-methyl-D-erythritol 2-phosphate = 2-C-methyl-D-erythritol 2,4-cyclic diphosphate + CMP. It functions in the pathway isoprenoid biosynthesis; isopentenyl diphosphate biosynthesis via DXP pathway; isopentenyl diphosphate from 1-deoxy-D-xylulose 5-phosphate: step 4/6. Functionally, involved in the biosynthesis of isopentenyl diphosphate (IPP) and dimethylallyl diphosphate (DMAPP), two major building blocks of isoprenoid compounds. Catalyzes the conversion of 4-diphosphocytidyl-2-C-methyl-D-erythritol 2-phosphate (CDP-ME2P) to 2-C-methyl-D-erythritol 2,4-cyclodiphosphate (ME-CPP) with a corresponding release of cytidine 5-monophosphate (CMP). This is 2-C-methyl-D-erythritol 2,4-cyclodiphosphate synthase from Bacillus cereus (strain B4264).